The primary structure comprises 549 residues: Teichoic acids export ATP-binding protein TagH (549 aa).

One can recognise an ABC transporter domain in the interval 22–243 (DKLKDLFFRS…YDEFLKKYNQ (222 aa)). 57–64 (GLNGSGKS) contacts ATP. A unknown region spans residues 244 to 549 (MSVEERKDLR…EIQSISIVKK (306 aa)). The 70-residue stretch at 346–415 (AAKYIVNSNG…ISTKFIEPFK (70 aa)) folds into the SH3b domain.

It belongs to the ABC transporter superfamily. Teichoic acids exporter (TC 3.A.1.104.1) family. The complex is composed of two ATP-binding proteins (TagH) and two transmembrane proteins (TagG).

It is found in the cell membrane. The catalysed reaction is ATP + H2O + teichoic acidSide 1 = ADP + phosphate + teichoic acidSide 2.. In terms of biological role, part of the ABC transporter complex TagGH involved in teichoic acids export. Responsible for energy coupling to the transport system. In Bacillus anthracis, this protein is Teichoic acids export ATP-binding protein TagH.